Consider the following 371-residue polypeptide: Beta sliding clamp (371 aa).

Belongs to the beta sliding clamp family. In terms of assembly, forms a ring-shaped head-to-tail homodimer around DNA which binds and tethers DNA polymerases and other proteins to the DNA. The DNA replisome complex has a single clamp-loading complex (3 tau and 1 each of delta, delta', psi and chi subunits) which binds 3 Pol III cores (1 core on the leading strand and 2 on the lagging strand) each with a beta sliding clamp dimer. Additional proteins in the replisome are other copies of gamma, psi and chi, Ssb, DNA helicase and RNA primase.

Its subcellular location is the cytoplasm. Functionally, confers DNA tethering and processivity to DNA polymerases and other proteins. Acts as a clamp, forming a ring around DNA (a reaction catalyzed by the clamp-loading complex) which diffuses in an ATP-independent manner freely and bidirectionally along dsDNA. Initially characterized for its ability to contact the catalytic subunit of DNA polymerase III (Pol III), a complex, multichain enzyme responsible for most of the replicative synthesis in bacteria; Pol III exhibits 3'-5' exonuclease proofreading activity. The beta chain is required for initiation of replication as well as for processivity of DNA replication. In Treponema pallidum (strain Nichols), this protein is Beta sliding clamp (dnaN).